Reading from the N-terminus, the 66-residue chain is Large ribosomal subunit protein bL35 (66 aa).

The tract at residues 1 to 23 is disordered; that stretch reads MPKMKTHRASAKRFKRTANGGLK.

Belongs to the bacterial ribosomal protein bL35 family.

The polypeptide is Large ribosomal subunit protein bL35 (Lactobacillus helveticus (strain DPC 4571)).